The following is a 356-amino-acid chain: Phospho-2-dehydro-3-deoxyheptonate aldolase, Tyr-sensitive (356 aa).

Belongs to the class-I DAHP synthase family. It depends on a divalent metal cation as a cofactor.

It catalyses the reaction D-erythrose 4-phosphate + phosphoenolpyruvate + H2O = 7-phospho-2-dehydro-3-deoxy-D-arabino-heptonate + phosphate. The protein operates within metabolic intermediate biosynthesis; chorismate biosynthesis; chorismate from D-erythrose 4-phosphate and phosphoenolpyruvate: step 1/7. With respect to regulation, specifically feedback inhibited by tyrosine with 50% inhibition observed at 9 microM tyrosine, pH 7.0. Stereospecific condensation of phosphoenolpyruvate (PEP) and D-erythrose-4-phosphate (E4P) giving rise to 3-deoxy-D-arabino-heptulosonate-7-phosphate (DAHP). The sequence is that of Phospho-2-dehydro-3-deoxyheptonate aldolase, Tyr-sensitive (aroF) from Escherichia coli (strain K12).